A 356-amino-acid chain; its full sequence is tRNA-specific 2-thiouridylase MnmA 1 (356 aa).

ATP is bound by residues 8-15 (GMSGGVDS) and methionine 34. Cysteine 103 serves as the catalytic Nucleophile. Cysteine 103 and cysteine 199 are oxidised to a cystine. Residue glycine 127 coordinates ATP. Residues 149–151 (KDQ) form an interaction with tRNA region. Cysteine 199 serves as the catalytic Cysteine persulfide intermediate. The tract at residues 305–306 (RY) is interaction with tRNA.

Belongs to the MnmA/TRMU family.

Its subcellular location is the cytoplasm. It carries out the reaction S-sulfanyl-L-cysteinyl-[protein] + uridine(34) in tRNA + AH2 + ATP = 2-thiouridine(34) in tRNA + L-cysteinyl-[protein] + A + AMP + diphosphate + H(+). Catalyzes the 2-thiolation of uridine at the wobble position (U34) of tRNA, leading to the formation of s(2)U34. The protein is tRNA-specific 2-thiouridylase MnmA 1 of Clostridium botulinum (strain Langeland / NCTC 10281 / Type F).